A 598-amino-acid chain; its full sequence is MKPAGTDPRILSLAAEVAKSPEQNVPVILLKLKEIINNTPLGSSELKKVKQDIYCYDLIQYCLLVLSQDSSRIQGGWSTISQLTQILSHCCVGLEPGEDGEEFYKELLPSAAENFLILGRRLQTCFINATKGEEQDKLLHFFQIVTDSLFWLLGGHVQLIQNVLQSDHFLHLLQTDNVQIGASVMTLLQNILQINSGNLLKIEGKALHSILDEILFKLLSTPSPVIRSTATKLLLVLAESHQEILILLRLSACYKGLRSLLNKQETLTEFSRELRQLVDLLTPKIHQEVEEQKLHKAACLIQAYWKGFQTRKRLKKLPSAVIALQRSFRSKRTKMMLELNRQKEEEDLRLKLQLQRQRAMRLSRESRLNMLEIIHPGQVEKYNREMEEKSALTIQKHWRGYRERKNFRQQRPSLTEYKAAVTLQRAVLKFLAKCRKKKKLFASWHGLQELTDARRVELKQQVDDYVKRHPCSQMSEAASRELHAQAQERLQHYFMGRAIEERAQQHREALMAQISTNIEQLMKAPSLKEAEGKEPEQFLSRSRPVAAKAKQAHLTTLKHIQAPWWKKLGEEPGDEVDVPKDELSIDLGMLFIGGTKPP.

Residues 1 to 157 form an interaction with BBS1, BBS8 and BBS9 region; it reads MKPAGTDPRI…SLFWLLGGHV (157 aa). The interval 287–598 is interaction with CEP290, BBS1, BBS2, BBS4, BBS5, BBS7, BBS8 and BBS9; it reads QEVEEQKLHK…MLFIGGTKPP (312 aa). IQ domains are found at residues 294-317, 318-338, 387-416, and 417-437; these read LHKA…LKKL, PSAV…MMLE, EEKS…SLTE, and YKAA…CRKK. Residues 336–362 are a coiled coil; the sequence is MLELNRQKEEEDLRLKLQLQRQRAMRL. Residues 530 to 598 are interaction with BBS1, BBS2, BBS4, BBS7, BBS8 and BBS9; sequence AEGKEPEQFL…MLFIGGTKPP (69 aa).

As to quaternary structure, interacts with calmodulin. Interacts with CEP290/NPHP6; IQCB1/NPHP5 and CEP290/NPHP6; are proposed to form a functional NPHP5-6 module localized to the centrosome. Interacts with ATXN10. Interacts with NPHP1, INVS, NPHP4 and RPGRIP1L; these interactions likely require additional interactors. Associates with the BBSome complex; interacts with BBS1, BBS2, BBS4, BBS5, BBS7, BBS8 and BBS9. As to expression, localized to the outer segment and connecting cilia of photoreceptor cells.

It localises to the cytoplasm. The protein resides in the cytoskeleton. Its subcellular location is the microtubule organizing center. It is found in the centrosome. Involved in ciliogenesis. The function in an early step in cilia formation depends on its association with CEP290/NPHP6. Involved in regulation of the BBSome complex integrity, specifically for presence of BBS2 and BBS5 in the complex, and in ciliary targeting of selected BBSome cargos. May play a role in controlling entry of the BBSome complex to cilia possibly implicating CEP290/NPHP6. The protein is IQ calmodulin-binding motif-containing protein 1 (Iqcb1) of Mus musculus (Mouse).